A 189-amino-acid polypeptide reads, in one-letter code: Elongation factor P (189 aa).

An N6-(3,6-diaminohexanoyl)-5-hydroxylysine modification is found at Lys34.

It belongs to the elongation factor P family. In terms of processing, may be beta-lysylated on the epsilon-amino group of Lys-34 by the combined action of EpmA and EpmB, and then hydroxylated on the C5 position of the same residue by EpmC (if this protein is present). Lysylation is critical for the stimulatory effect of EF-P on peptide-bond formation. The lysylation moiety may extend toward the peptidyltransferase center and stabilize the terminal 3-CCA end of the tRNA. Hydroxylation of the C5 position on Lys-34 may allow additional potential stabilizing hydrogen-bond interactions with the P-tRNA.

It localises to the cytoplasm. It functions in the pathway protein biosynthesis; polypeptide chain elongation. Functionally, involved in peptide bond synthesis. Alleviates ribosome stalling that occurs when 3 or more consecutive Pro residues or the sequence PPG is present in a protein, possibly by augmenting the peptidyl transferase activity of the ribosome. Modification of Lys-34 is required for alleviation. This Saccharophagus degradans (strain 2-40 / ATCC 43961 / DSM 17024) protein is Elongation factor P.